A 122-amino-acid chain; its full sequence is Large ribosomal subunit protein bL17 (122 aa).

This sequence belongs to the bacterial ribosomal protein bL17 family. In terms of assembly, part of the 50S ribosomal subunit. Contacts protein L32.

This Staphylococcus aureus (strain Mu3 / ATCC 700698) protein is Large ribosomal subunit protein bL17.